Here is a 282-residue protein sequence, read N- to C-terminus: 4-hydroxy-3-methylbut-2-enyl diphosphate reductase (282 aa).

Cys-12 lines the [4Fe-4S] cluster pocket. Residues His-40 and His-72 each coordinate (2E)-4-hydroxy-3-methylbut-2-enyl diphosphate. Positions 40 and 72 each coordinate dimethylallyl diphosphate. The isopentenyl diphosphate site is built by His-40 and His-72. Cys-94 contributes to the [4Fe-4S] cluster binding site. His-122 contacts (2E)-4-hydroxy-3-methylbut-2-enyl diphosphate. Dimethylallyl diphosphate is bound at residue His-122. His-122 serves as a coordination point for isopentenyl diphosphate. The active-site Proton donor is the Glu-124. Thr-160 is a binding site for (2E)-4-hydroxy-3-methylbut-2-enyl diphosphate. Cys-188 contacts [4Fe-4S] cluster. Residues Ser-216, Asn-218, and Ser-260 each coordinate (2E)-4-hydroxy-3-methylbut-2-enyl diphosphate. Residues Ser-216, Asn-218, and Ser-260 each coordinate dimethylallyl diphosphate. Residues Ser-216, Asn-218, and Ser-260 each contribute to the isopentenyl diphosphate site.

The protein belongs to the IspH family. The cofactor is [4Fe-4S] cluster.

The enzyme catalyses isopentenyl diphosphate + 2 oxidized [2Fe-2S]-[ferredoxin] + H2O = (2E)-4-hydroxy-3-methylbut-2-enyl diphosphate + 2 reduced [2Fe-2S]-[ferredoxin] + 2 H(+). The catalysed reaction is dimethylallyl diphosphate + 2 oxidized [2Fe-2S]-[ferredoxin] + H2O = (2E)-4-hydroxy-3-methylbut-2-enyl diphosphate + 2 reduced [2Fe-2S]-[ferredoxin] + 2 H(+). It functions in the pathway isoprenoid biosynthesis; dimethylallyl diphosphate biosynthesis; dimethylallyl diphosphate from (2E)-4-hydroxy-3-methylbutenyl diphosphate: step 1/1. Its pathway is isoprenoid biosynthesis; isopentenyl diphosphate biosynthesis via DXP pathway; isopentenyl diphosphate from 1-deoxy-D-xylulose 5-phosphate: step 6/6. Functionally, catalyzes the conversion of 1-hydroxy-2-methyl-2-(E)-butenyl 4-diphosphate (HMBPP) into a mixture of isopentenyl diphosphate (IPP) and dimethylallyl diphosphate (DMAPP). Acts in the terminal step of the DOXP/MEP pathway for isoprenoid precursor biosynthesis. The sequence is that of 4-hydroxy-3-methylbut-2-enyl diphosphate reductase from Geobacter sulfurreducens (strain ATCC 51573 / DSM 12127 / PCA).